The following is a 977-amino-acid chain: Ephrin type-A receptor 2 (977 aa).

Positions M1–G25 are cleaved as a signal peptide. The segment at M1–Q205 is mediates interaction with CLDN4. The Extracellular segment spans residues K26–V538. Positions E27–Q205 constitute an Eph LBD domain. Disulfide bonds link C69–C187 and C104–C114. A Fibronectin type-III 1 domain is found at P329–V433. N-linked (GlcNAc...) asparagine glycosylation is found at N408 and N436. The Fibronectin type-III 2 domain maps to E439–T530. A helical membrane pass occupies residues I539–I559. Over H560–I977 the chain is Cytoplasmic. A phosphoserine mark is found at S571 and S580. 2 positions are modified to phosphotyrosine; by autocatalysis: Y589 and Y595. The interval T607–F907 is mediates interaction with ARHGEF16. A Protein kinase domain is found at V614–I876. Residue I620–V628 coordinates ATP. Residue Y629 is modified to Phosphotyrosine. Residue K647 coordinates ATP. T648 is subject to Phosphothreonine. Y736 carries the phosphotyrosine; by autocatalysis modification. Residue D740 is the Proton acceptor of the active site. Residue Y773 is modified to Phosphotyrosine; by autocatalysis. S870, S893, S898, and S902 each carry phosphoserine. The tract at residues D887–I977 is negatively regulates interaction with ARHGEF16. In terms of domain architecture, SAM spans V905 to Q969. Y922 is subject to Phosphotyrosine; by autocatalysis. Y931 carries the phosphotyrosine modification. Residues I975 to I977 carry the PDZ-binding motif.

It belongs to the protein kinase superfamily. Tyr protein kinase family. Ephrin receptor subfamily. Homodimer. Interacts with INPPL1; regulates activated EPHA2 endocytosis and degradation. Interacts (inactivated form) with PTK2/FAK1 and interacts (EFNA1 ligand-activated form) with PTPN11; regulates integrin-mediated adhesion. Interacts with ARHGEF16, DOCK4 and ELMO2; mediates ligand-independent activation of RAC1 which stimulates cell migration. Interacts with CLDN4; phosphorylates CLDN4 and may regulate tight junctions. Interacts with ACP1. Interacts with CEMIP. Interacts with NCK1; may regulate EPHA2 activity in cell migration and adhesion. Interacts with SLA. Interacts (phosphorylated form) with VAV2, VAV3 and PI3-kinase p85 subunit (PIK3R1, PIK3R2 or PIK3R3); critical for the EFNA1-induced activation of RAC1 which stimulates cell migration. Interacts with ANKS1A. Interacts with TIMD4. Autophosphorylates. Phosphorylated at Ser-898 by PKB; serum-induced phosphorylation which targets EPHA2 to the cell leading edge and stimulates cell migration. Phosphorylation by PKB is inhibited by EFNA1-activated EPHA2 which regulates PKB activity via a reciprocal regulatory loop. Phosphorylated on tyrosine upon binding and activation by EFNA1. Phosphorylated residues Tyr-589 and Tyr-595 are required for binding VAV2 and VAV3 while phosphorylated residues Tyr-736 and Tyr-931 are required for binding PI3-kinase p85 subunit (PIK3R1, PIK3R2 or PIK3R3). These phosphorylated residues are critical for recruitment of VAV2 and VAV3 and PI3-kinase p85 subunit which transduce downstream signaling to activate RAC1 GTPase and cell migration. Dephosphorylation of Tyr-931 by PTPRF prevents the interaction of EPHA2 with NCK1. Phosphorylated at Ser-898 in response to TNF by RPS6KA1 and RPS6KA3; RPS6KA-EPHA2 signaling pathway controls cell migration. Phosphorylated at Ser-898 by PKA; blocks cell retraction induced by EPHA2 kinase activity. Dephosphorylated by ACP1. Post-translationally, ubiquitinated by CHIP/STUB1. Ubiquitination is regulated by the HSP90 chaperone and regulates the receptor stability and activity through proteasomal degradation. ANKS1A prevents ubiquitination and degradation. As to expression, expressed in the lung, intestine and liver. Expressed in myogenic progenitor cells.

The protein resides in the cell membrane. It localises to the cell projection. It is found in the ruffle membrane. Its subcellular location is the lamellipodium membrane. The protein localises to the cell junction. The protein resides in the focal adhesion. The catalysed reaction is L-tyrosyl-[protein] + ATP = O-phospho-L-tyrosyl-[protein] + ADP + H(+). Functionally, receptor tyrosine kinase which binds promiscuously membrane-bound ephrin-A family ligands residing on adjacent cells, leading to contact-dependent bidirectional signaling into neighboring cells. The signaling pathway downstream of the receptor is referred to as forward signaling while the signaling pathway downstream of the ephrin ligand is referred to as reverse signaling. Activated by the ligand ephrin-A1/EFNA1 regulates migration, integrin-mediated adhesion, proliferation and differentiation of cells. Regulates cell adhesion and differentiation through DSG1/desmoglein-1 and inhibition of the ERK1/ERK2 signaling pathway. May also participate in UV radiation-induced apoptosis and have a ligand-independent stimulatory effect on chemotactic cell migration. During development, may function in distinctive aspects of pattern formation and subsequently in development of several fetal tissues. Involved for instance in angiogenesis, in early hindbrain development and epithelial proliferation and branching morphogenesis during mammary gland development. Engaged by the ligand ephrin-A5/EFNA5 may regulate lens fiber cells shape and interactions and be important for lens transparency development and maintenance. With ephrin-A2/EFNA2 may play a role in bone remodeling through regulation of osteoclastogenesis and osteoblastogenesis. In Mus musculus (Mouse), this protein is Ephrin type-A receptor 2 (Epha2).